Reading from the N-terminus, the 583-residue chain is Afadin- and alpha-actinin-binding protein (583 aa).

3 coiled-coil regions span residues 108–220 (NNVE…LAIE), 255–333 (DYEA…QLTN), and 420–453 (EEKERLKEEWRLFDEQKRNFEKERKNFTEAAIRL). Positions 285 to 328 (LSPCPPLNRGGSAEESQELGDSDREERSAETSRETLDQSCEHAR) are disordered. Basic and acidic residues predominate over residues 305–328 (DSDREERSAETSRETLDQSCEHAR). A disordered region spans residues 480-527 (DRMRSSSSDGQSALSVKSEPEIRTSSSKAPPVKSSAYTTFSTPKSSKS). The segment covering 484 to 494 (SSSSDGQSALS) has biased composition (polar residues). Over residues 504-515 (SSSKAPPVKSSA) the composition is skewed to low complexity. Positions 516–527 (YTTFSTPKSSKS) are enriched in polar residues.

The protein belongs to the ADIP family.

It is found in the cell junction. The protein resides in the adherens junction. The protein localises to the cytoplasm. It localises to the cytoskeleton. Its subcellular location is the microtubule organizing center. It is found in the centrosome. The protein resides in the centriolar satellite. Functionally, belongs to an adhesion system, which plays a role in the organization of homotypic, interneuronal and heterotypic cell-cell adherens junctions (AJs). Involved in cell movement. Acts as a centrosome maturation factor, probably by maintaining the integrity of the pericentriolar material and proper microtubule nucleation at mitotic spindle poles. This is Afadin- and alpha-actinin-binding protein (ssx2ip) from Oryzias latipes (Japanese rice fish).